Reading from the N-terminus, the 258-residue chain is 5'-nucleotidase SurE (258 aa).

A divalent metal cation contacts are provided by Asp-8, Asp-9, Ser-40, and Asn-92.

The protein belongs to the SurE nucleotidase family. It depends on a divalent metal cation as a cofactor.

The protein resides in the cytoplasm. The catalysed reaction is a ribonucleoside 5'-phosphate + H2O = a ribonucleoside + phosphate. Its function is as follows. Nucleotidase that shows phosphatase activity on nucleoside 5'-monophosphates. The protein is 5'-nucleotidase SurE of Brucella anthropi (strain ATCC 49188 / DSM 6882 / CCUG 24695 / JCM 21032 / LMG 3331 / NBRC 15819 / NCTC 12168 / Alc 37) (Ochrobactrum anthropi).